The sequence spans 397 residues: RNA pseudouridine synthase 5 (397 aa).

One can recognise an S4 RNA-binding domain in the interval 64-114; it reads APLPGWIKRIRDGQITVDGEVATDPDMILREGSKLVYHRLPWQEPFAPHLL.

Belongs to the pseudouridine synthase RluA family.

It catalyses the reaction a uridine in RNA = a pseudouridine in RNA. The protein is RNA pseudouridine synthase 5 of Oryza sativa subsp. japonica (Rice).